An 802-amino-acid chain; its full sequence is Acetyl-CoA decarbonylase/synthase complex subunit alpha 1 (802 aa).

4 residues coordinate [4Fe-4S] cluster: C68, C71, C76, and C86. H109 contributes to the CO binding site. [Ni-4Fe-4S] cluster contacts are provided by H243, C271, and C310. 2 4Fe-4S ferredoxin-type domains span residues 395–424 and 435–464; these read DEAL…VDQG and SKLA…INVI. The [4Fe-4S] cluster site is built by C405, C408, C411, C415, C444, C447, C450, and C454. 3 residues coordinate [Ni-4Fe-4S] cluster: C512, C541, and C576.

It belongs to the Ni-containing carbon monoxide dehydrogenase family. In terms of assembly, heterotetramer of two alpha and two epsilon subunits. The ACDS complex is made up of alpha, epsilon, beta, gamma and delta subunits with a probable stoichiometry of (alpha(2)epsilon(2))(4)-beta(8)-(gamma(1)delta(1))(8). It depends on [4Fe-4S] cluster as a cofactor. [Ni-4Fe-4S] cluster serves as cofactor.

It catalyses the reaction CO + 2 oxidized [2Fe-2S]-[ferredoxin] + H2O = 2 reduced [2Fe-2S]-[ferredoxin] + CO2 + 2 H(+). Functionally, part of the ACDS complex that catalyzes the reversible cleavage of acetyl-CoA, allowing autotrophic growth from CO(2). The alpha-epsilon subcomponent functions as a carbon monoxide dehydrogenase. In Archaeoglobus fulgidus (strain ATCC 49558 / DSM 4304 / JCM 9628 / NBRC 100126 / VC-16), this protein is Acetyl-CoA decarbonylase/synthase complex subunit alpha 1.